Here is a 275-residue protein sequence, read N- to C-terminus: Shikimate dehydrogenase (NADP(+)) (275 aa).

Residues 19–21 (SIS) and Thr66 contribute to the shikimate site. The Proton acceptor role is filled by Lys70. Shikimate is bound by residues Asn91 and Asp106. Residues 129–133 (GAGGA), 153–158 (NRTYGR), and Ile219 contribute to the NADP(+) site. Residue Tyr221 participates in shikimate binding. Gly242 serves as a coordination point for NADP(+).

Belongs to the shikimate dehydrogenase family. In terms of assembly, homodimer.

It carries out the reaction shikimate + NADP(+) = 3-dehydroshikimate + NADPH + H(+). It functions in the pathway metabolic intermediate biosynthesis; chorismate biosynthesis; chorismate from D-erythrose 4-phosphate and phosphoenolpyruvate: step 4/7. Its function is as follows. Involved in the biosynthesis of the chorismate, which leads to the biosynthesis of aromatic amino acids. Catalyzes the reversible NADPH linked reduction of 3-dehydroshikimate (DHSA) to yield shikimate (SA). This Dictyoglomus thermophilum (strain ATCC 35947 / DSM 3960 / H-6-12) protein is Shikimate dehydrogenase (NADP(+)).